The chain runs to 200 residues: Transgelin (200 aa).

Ala2 carries the N-acetylalanine modification. One can recognise a Calponin-homology (CH) domain in the interval 24–137 (DELEDRLVEW…RTLVALGSLA (114 aa)). The stretch at 175 to 199 (IGLQMGTNKGASQAGMSYGRPRQII) is one Calponin-like repeat.

It belongs to the calponin family. Monomer. Gizzard, uterus, intestine, esophagus, aorta, and trace amounts in brain, liver and heart.

The protein localises to the cytoplasm. Functionally, actin cross-linking/gelling protein. The polypeptide is Transgelin (TAGLN) (Gallus gallus (Chicken)).